Here is a 356-residue protein sequence, read N- to C-terminus: MGLDITQKKRRIALGCEGSANKLGIGVILHEGDTSTVLSNVRHTFVSPAGTGFLPKDTAQHHRAFFVRVAKQALSDAGIRIADIDCICYTRGPGMGGPLASVAVAARTLALLWGKELVGVNHCVGHIEMGRTITGADHPVVLYVSGGNTQVIAYAEQRYRIFGETLDIAVGNCLDRFARALNISNDPAPGYNIEVLARKGGRVLLDLPYAVKGMDCSFSGILTRAEELAAQMKANEGKGTDGEPFTGADLCFSLQETVFAMLVEITERAMAHVGSNQVLIVGGVGCNERLQEMMGLMAADRGGSVYATDERFCIDNGIMIAHAGLLAYETGFRTPIEESTCTQRFRTDEVLVKWRK.

Residues His-122, His-126, and Tyr-143 each coordinate a divalent metal cation. Substrate contacts are provided by residues 143–147 (YVSGG), Asp-175, Gly-190, Glu-194, and Asn-287. Asp-315 lines the a divalent metal cation pocket.

It belongs to the KAE1 / TsaD family. Component of the EKC/KEOPS complex composed of at least BUD32, CGI121, GON7, KAE1 and PCC1; the whole complex dimerizes. Requires a divalent metal cation as cofactor.

Its subcellular location is the cytoplasm. It is found in the nucleus. The enzyme catalyses L-threonylcarbamoyladenylate + adenosine(37) in tRNA = N(6)-L-threonylcarbamoyladenosine(37) in tRNA + AMP + H(+). In terms of biological role, component of the EKC/KEOPS complex that is required for the formation of a threonylcarbamoyl group on adenosine at position 37 (t(6)A37) in tRNAs that read codons beginning with adenine. The complex is probably involved in the transfer of the threonylcarbamoyl moiety of threonylcarbamoyl-AMP (TC-AMP) to the N6 group of A37. KAE1 likely plays a direct catalytic role in this reaction, but requires other protein(s) of the complex to fulfill this activity. The EKC/KEOPS complex also promotes both telomere uncapping and telomere elongation. The complex is required for efficient recruitment of transcriptional coactivators. This is tRNA N6-adenosine threonylcarbamoyltransferase from Chaetomium globosum (strain ATCC 6205 / CBS 148.51 / DSM 1962 / NBRC 6347 / NRRL 1970) (Soil fungus).